A 315-amino-acid chain; its full sequence is Thioredoxin reductase (315 aa).

34–41 (EGMKVGGQ) lines the FAD pocket. Cysteines 134 and 137 form a disulfide. 282 to 291 (DIRVKSLRQV) provides a ligand contact to FAD.

Belongs to the class-II pyridine nucleotide-disulfide oxidoreductase family. As to quaternary structure, homodimer. FAD is required as a cofactor.

It localises to the cytoplasm. It catalyses the reaction [thioredoxin]-dithiol + NADP(+) = [thioredoxin]-disulfide + NADPH + H(+). The polypeptide is Thioredoxin reductase (trxB) (Peptoclostridium litorale (Clostridium litorale)).